The sequence spans 75 residues: Small ribosomal subunit protein bS18 (75 aa).

Belongs to the bacterial ribosomal protein bS18 family. As to quaternary structure, part of the 30S ribosomal subunit. Forms a tight heterodimer with protein bS6.

Its function is as follows. Binds as a heterodimer with protein bS6 to the central domain of the 16S rRNA, where it helps stabilize the platform of the 30S subunit. This chain is Small ribosomal subunit protein bS18, found in Dinoroseobacter shibae (strain DSM 16493 / NCIMB 14021 / DFL 12).